The sequence spans 604 residues: UvrABC system protein C (604 aa).

The region spanning 13 to 92 (ASPGVYLMKD…IKKYHPKYNV (80 aa)) is the GIY-YIG domain. Residues 205–240 (SEIVQDLEKSIEKASKEQKFEQAGMYYRTLKLIQQA) enclose the UVR domain.

This sequence belongs to the UvrC family. As to quaternary structure, interacts with UvrB in an incision complex.

The protein resides in the cytoplasm. Its function is as follows. The UvrABC repair system catalyzes the recognition and processing of DNA lesions. UvrC both incises the 5' and 3' sides of the lesion. The N-terminal half is responsible for the 3' incision and the C-terminal half is responsible for the 5' incision. This chain is UvrABC system protein C, found in Chlamydia abortus (strain DSM 27085 / S26/3) (Chlamydophila abortus).